The chain runs to 486 residues: Ribulose bisphosphate carboxylase large chain 1 (486 aa).

Substrate contacts are provided by Asn-125 and Thr-175. Catalysis depends on Lys-177, which acts as the Proton acceptor. Residue Lys-179 coordinates substrate. Mg(2+)-binding residues include Lys-203, Asp-205, and Glu-206. N6-carboxylysine is present on Lys-203. Residue His-295 is the Proton acceptor of the active site. Residues Arg-296, His-328, and Ser-380 each contribute to the substrate site.

The protein belongs to the RuBisCO large chain family. Type I subfamily. In terms of assembly, heterohexadecamer of 8 large chains and 8 small chains. Requires Mg(2+) as cofactor.

The catalysed reaction is 2 (2R)-3-phosphoglycerate + 2 H(+) = D-ribulose 1,5-bisphosphate + CO2 + H2O. It carries out the reaction D-ribulose 1,5-bisphosphate + O2 = 2-phosphoglycolate + (2R)-3-phosphoglycerate + 2 H(+). Its function is as follows. RuBisCO catalyzes two reactions: the carboxylation of D-ribulose 1,5-bisphosphate, the primary event in carbon dioxide fixation, as well as the oxidative fragmentation of the pentose substrate. Both reactions occur simultaneously and in competition at the same active site. In Cereibacter sphaeroides (strain ATCC 17025 / ATH 2.4.3) (Rhodobacter sphaeroides), this protein is Ribulose bisphosphate carboxylase large chain 1.